A 435-amino-acid chain; its full sequence is Chromatin structure-remodeling complex subunit RSC7 (435 aa).

The segment at 1–97 (MSDSEGGLAS…DKGVTRSRNR (97 aa)) is disordered. The segment covering 30-66 (DTEDLDIDENDENEDDDYREEEANEGVNEEEISDEEE) has biased composition (acidic residues). Serine 86 carries the post-translational modification Phosphoserine. The segment at 248–435 (ELRTKGNVIE…QNFEKCNEYI (188 aa)) is functional region; able to complement all NPL6 null allele phenotypes.

Belongs to the RSC7/SWP82 family. RSC7 subfamily. In terms of assembly, interacts with ARP7, ARP9, RSC3, RSC8, RSC30 and STH1. Component of the two forms of the RSC complex composed of at least either RSC1 or RSC2, and ARP7, ARP9, LDB7, NPL6, RSC3, RSC30, RSC4, RSC58, RSC6, RSC8, RSC9, SFH1, STH1, HTL1 and probably RTT102. The complexes interact with histone and histone variant components of centromeric chromatin. Component of a fungal-specific module (HTL1-LDB7-NPL6-RSC3-RSC30) within the RSC complex.

Its subcellular location is the nucleus. Its function is as follows. Component of the chromatin structure remodeling complex (RSC), which is involved in transcription regulation and nucleosome positioning. RSC is responsible for the transfer of a histone octamer from a nucleosome core particle to naked DNA. The reaction requires ATP and involves an activated RSC-nucleosome intermediate. Remodeling reaction also involves DNA translocation, DNA twist and conformational change. As a reconfigurer of centromeric and flanking nucleosomes, RSC complex is required both for proper kinetochore function in chromosome segregation and, via a PKC1-dependent signaling pathway, for organization of the cellular cytoskeleton. Together with HTL1, LDB7, RSC3, RSC30 components, defines a fungal-specific module within the RSC complex that plays a role in many cellular functions including the maintenance of cell wall integrity. Acidic protein important for nuclear protein localization. The polypeptide is Chromatin structure-remodeling complex subunit RSC7 (NPL6) (Saccharomyces cerevisiae (strain ATCC 204508 / S288c) (Baker's yeast)).